The following is a 311-amino-acid chain: Probable dihydroorotate dehydrogenase A (fumarate) (311 aa).

FMN-binding positions include S20 and K44 to T45. Substrate contacts are provided by residues K44, N68–L72, and N127. Position 127 (N127) interacts with FMN. Residue C130 is the Nucleophile of the active site. Residues K164 and I192 each coordinate FMN. N193 to S194 is a substrate binding site. FMN contacts are provided by residues G221, G249 to G250, and G271 to T272.

Belongs to the dihydroorotate dehydrogenase family. Type 1 subfamily. Homodimer. The cofactor is FMN.

The protein resides in the cytoplasm. It carries out the reaction (S)-dihydroorotate + fumarate = orotate + succinate. It functions in the pathway pyrimidine metabolism; UMP biosynthesis via de novo pathway. In terms of biological role, catalyzes the conversion of dihydroorotate to orotate with fumarate as the electron acceptor. The protein is Probable dihydroorotate dehydrogenase A (fumarate) (pyrDA) of Enterococcus faecalis (strain ATCC 700802 / V583).